The sequence spans 456 residues: Probable hexose phosphate transport protein (456 aa).

The next 11 helical transmembrane spans lie at 34–54, 70–90, 113–133, 161–181, 185–205, 257–277, 302–322, 331–351, 363–383, 394–414, and 421–441; these read IFYS…SFTF, LGII…VSGV, IFFG…INGW, VWST…GVAI, GWRG…FILI, YVLS…IYVV, LCVS…GWLS, GPMN…LWGT, FLFI…LAAA, ASGF…YPLG, and GWHG…ILFL.

This sequence belongs to the major facilitator superfamily. Organophosphate:Pi antiporter (OPA) (TC 2.A.1.4) family.

It localises to the cell membrane. Transport protein for sugar phosphate uptake. The polypeptide is Probable hexose phosphate transport protein (Chlamydia trachomatis serovar D (strain ATCC VR-885 / DSM 19411 / UW-3/Cx)).